A 507-amino-acid polypeptide reads, in one-letter code: Keratin, type II cuticular Hb5 (507 aa).

The segment at 1–123 (MSCRSYRISP…PNAQCVKYEE (123 aa)) is head. Positions 123 to 434 (EKEQIKCLNS…RLLEGEEQRL (312 aa)) constitute an IF rod domain. The tract at residues 124–158 (KEQIKCLNSKFAAFIDKVRFLEQQNKLLETKWQFY) is coil 1A. The segment at 159–168 (QNRKCCESNL) is linker 1. Positions 169–269 (EPLFGGYIEA…YEEEVCVLQA (101 aa)) are coil 1B. A Glycyl lysine isopeptide (Lys-Gly) (interchain with G-Cter in SUMO1) cross-link involves residue lysine 229. Positions 270–286 (HISDTSVIVKMDNSRDL) are linker 12. The coil 2 stretch occupies residues 287–430 (NMDCVVAEIK…ATYRRLLEGE (144 aa)). Positions 431–507 (EQRLCEGVGS…CGSSRSVRFA (77 aa)) are tail.

Belongs to the intermediate filament family. In terms of assembly, heterotetramer of two type I and two type II keratins.

This is Keratin, type II cuticular Hb5 (Krt85) from Mus musculus (Mouse).